The chain runs to 269 residues: Tryptophan synthase alpha chain (269 aa).

Residues E50 and D61 each act as proton acceptor in the active site.

The protein belongs to the TrpA family. Tetramer of two alpha and two beta chains.

It catalyses the reaction (1S,2R)-1-C-(indol-3-yl)glycerol 3-phosphate + L-serine = D-glyceraldehyde 3-phosphate + L-tryptophan + H2O. The protein operates within amino-acid biosynthesis; L-tryptophan biosynthesis; L-tryptophan from chorismate: step 5/5. In terms of biological role, the alpha subunit is responsible for the aldol cleavage of indoleglycerol phosphate to indole and glyceraldehyde 3-phosphate. In Francisella tularensis subsp. tularensis (strain WY96-3418), this protein is Tryptophan synthase alpha chain.